A 154-amino-acid chain; its full sequence is Actin-related protein 2/3 complex subunit 5 (154 aa).

A Phosphothreonine modification is found at T142.

It belongs to the ARPC5 family. In terms of assembly, component of the Arp2/3 complex composed of ARP2, ARP3, ARC40/p41-ARC, ARC35/p34-ARC, ARC18/p21-ARC, ARC19/p20-ARC and ARC16/p16-ARC.

It localises to the cytoplasm. It is found in the cytoskeleton. The protein localises to the actin patch. In terms of biological role, functions as a component of the Arp2/3 complex which is involved in regulation of actin polymerization and together with an activating nucleation-promoting factor (NPF) mediates the formation of branched actin networks. This chain is Actin-related protein 2/3 complex subunit 5 (ARC15), found in Saccharomyces cerevisiae (strain ATCC 204508 / S288c) (Baker's yeast).